The following is a 37-amino-acid chain: Large ribosomal subunit protein bL36c (37 aa).

It belongs to the bacterial ribosomal protein bL36 family.

Its subcellular location is the plastid. It localises to the chloroplast. This chain is Large ribosomal subunit protein bL36c, found in Staurastrum punctulatum (Green alga).